The following is a 530-amino-acid chain: TNF receptor-associated factor family protein DDB_G0272829 (530 aa).

The RING-type; degenerate zinc-finger motif lies at 35 to 81 (CQICEGLLISSLIPNRMKALQCINGHCFCLTCWESILEIKSECPTCR). TRAF-type zinc fingers lie at residues 134–188 (RHES…KQMQ) and 189–246 (GHIL…NDND). Disordered regions lie at residues 242–267 (NNDN…LSSS), 391–432 (TTTT…DNQG), and 483–530 (FNQL…GTSL). Low complexity-rich tracts occupy residues 253–267 (NNSN…LSSS), 391–415 (TTTT…NNNN), and 485–502 (QLSQ…SQSL). A coiled-coil region spans residues 361–422 (ILEHQQQQNQ…NNNNEDEEDD (62 aa)). Polar residues predominate over residues 509–530 (ITINQNQNTPSNPFSIFSGTSL).

It belongs to the TNF receptor-associated factor family.

It is found in the cytoplasm. In terms of biological role, probable adapter protein and signal transducer that links members of the tumor necrosis factor receptor family to different signaling pathways by association with the receptor cytoplasmic domain and kinases. This chain is TNF receptor-associated factor family protein DDB_G0272829, found in Dictyostelium discoideum (Social amoeba).